The chain runs to 590 residues: Zinc finger protein 285 (590 aa).

Positions 8–86 (VTFKDVAVVF…WKQRIRDLTV (79 aa)) constitute a KRAB domain. The segment at 232–254 (FPCNNCGVAFADDTDPHVHHSTH) adopts a C2H2-type 1 zinc-finger fold. The C2H2-type 2; degenerate zinc-finger motif lies at 260 to 282 (YKCDQYGKNFSQSQDLIVHCKTH). 9 consecutive C2H2-type zinc fingers follow at residues 316-338 (YKCK…HRVH), 344-366 (YKCD…QGVH), 372-394 (YKCE…QRVH), 400-422 (YKCS…WRFH), 428-450 (YRCG…QRVH), 456-478 (YKCN…QRVH), 484-506 (YKCE…QRDH), 512-534 (YKCD…LRVH), and 540-562 (YKCK…QRVH).

This sequence belongs to the krueppel C2H2-type zinc-finger protein family.

It is found in the nucleus. May be involved in transcriptional regulation. This Homo sapiens (Human) protein is Zinc finger protein 285 (ZNF285).